Here is a 391-residue protein sequence, read N- to C-terminus: MAVKKRSIFEEVGQGAKAPVPQGGSIDRGHGGARRGIRLWLMALFLLVMAMIVVGGLTRLTDSGLSITEWRPVTGAVPPLNETQWAAEFDKYRDSPQYRLMNAGMTLAEFQRIYWWEWGHRQLGRVIGLVWAVGFLGFLAARRIPRGWWPRLLALGALGGLQGGIGWWMVASGLEGDKVTVESTRLATHLGLAFIILGLIAWQALLLGRSESDLLQARRQKDGRLVTLTTVLIGVAFLQIVLGALVAGIDAGRGFPTWPDMNGTFLPAEMFYVPGVETDWRNPAWWLGLLQNPGFVQFLHRMAGYTLAALGLIFWIFGRRSRHRATRGAFDLLAMALLAQILLGVGTVLSAAEWQVAIAHQVGAVVIWVLILHARHLALYPRVGSIRKGTL.

8 helical membrane passes run 37–57 (IRLWLMALFLLVMAMIVVGGL), 121–141 (RQLGRVIGLVWAVGFLGFLAA), 152–172 (LLALGALGGLQGGIGWWMVAS), 186–206 (LATHLGLAFIILGLIAWQALL), 229–249 (TTVLIGVAFLQIVLGALVAGI), 298–318 (FLHRMAGYTLAALGLIFWIFG), 332–352 (LLAMALLAQILLGVGTVLSAA), and 354–374 (WQVAIAHQVGAVVIWVLILHA). Histidine 300 lines the heme pocket. Histidine 360 contributes to the heme binding site.

The protein belongs to the COX15/CtaA family. Type 2 subfamily. In terms of assembly, interacts with CtaB. Heme b serves as cofactor.

The protein resides in the cell membrane. The catalysed reaction is Fe(II)-heme o + 2 A + H2O = Fe(II)-heme a + 2 AH2. Its pathway is porphyrin-containing compound metabolism; heme A biosynthesis; heme A from heme O: step 1/1. Catalyzes the conversion of heme O to heme A by two successive hydroxylations of the methyl group at C8. The first hydroxylation forms heme I, the second hydroxylation results in an unstable dihydroxymethyl group, which spontaneously dehydrates, resulting in the formyl group of heme A. The polypeptide is Heme A synthase (Cereibacter sphaeroides (strain ATCC 17023 / DSM 158 / JCM 6121 / CCUG 31486 / LMG 2827 / NBRC 12203 / NCIMB 8253 / ATH 2.4.1.) (Rhodobacter sphaeroides)).